A 281-amino-acid polypeptide reads, in one-letter code: Microtubule-associated protein RP/EB family member 3 (281 aa).

Positions 14–116 (NLSRHDMLAW…FIQWFKKFFD (103 aa)) constitute a Calponin-homology (CH) domain. The interval 157-181 (VPQRTSPTGPKNMQTSGRLSNVAPP) is disordered. Polar residues predominate over residues 158-175 (PQRTSPTGPKNMQTSGRL). Serine 162 and serine 176 each carry phosphoserine. The 71-residue stretch at 194–264 (GGHETDAQIL…LYATEEGFAP (71 aa)) folds into the EB1 C-terminal domain. The segment at 217-260 (DGLEKERDFYFSKLRDIELICQEHESENSPVISGIIGILYATEE) is APC-binding. Positions 217-281 (DGLEKERDFY…EHQQEDQDEY (65 aa)) are DCTN1-binding. A disordered region spans residues 261-281 (GFAPPEDDEIEEHQQEDQDEY). Basic and acidic residues predominate over residues 272–281 (EHQQEDQDEY).

Belongs to the MAPRE family. Homodimer. Heterodimer with MAPRE1. Binds monomeric and polymerized GTP-bound tubulin. Interacts with APC2. Interacts with DCTN1 and SRCIN1. Binds to the C-terminal domain of APC. Interacts (via C-terminus) with CLIP1. Interacts with SLAIN2 and SLAIN1. Interacts with AKAP9. Interacts with PDE4DIP. Interacts with PDE4DIP isoform 13/MMG8/SMYLE; this interaction is required for its recruitment to the Golgi apparatus. Predominantly expressed in brain and muscle.

It is found in the cytoplasm. The protein resides in the cytoskeleton. In terms of biological role, plus-end tracking protein (+TIP) that binds to the plus-end of microtubules and regulates the dynamics of the microtubule cytoskeleton. Promotes microtubule growth. May be involved in spindle function by stabilizing microtubules and anchoring them at centrosomes. Also acts as a regulator of minus-end microtubule organization: interacts with the complex formed by AKAP9 and PDE4DIP, leading to recruit CAMSAP2 to the Golgi apparatus, thereby tethering non-centrosomal minus-end microtubules to the Golgi, an important step for polarized cell movement. Promotes elongation of CAMSAP2-decorated microtubule stretches on the minus-end of microtubules. The chain is Microtubule-associated protein RP/EB family member 3 (MAPRE3) from Homo sapiens (Human).